Here is a 482-residue protein sequence, read N- to C-terminus: Probable cytosol aminopeptidase (482 aa).

Mn(2+)-binding residues include K251 and D256. K263 is an active-site residue. D274, D333, and E335 together coordinate Mn(2+). R337 is a catalytic residue.

This sequence belongs to the peptidase M17 family. Mn(2+) serves as cofactor.

The protein localises to the cytoplasm. It carries out the reaction Release of an N-terminal amino acid, Xaa-|-Yaa-, in which Xaa is preferably Leu, but may be other amino acids including Pro although not Arg or Lys, and Yaa may be Pro. Amino acid amides and methyl esters are also readily hydrolyzed, but rates on arylamides are exceedingly low.. It catalyses the reaction Release of an N-terminal amino acid, preferentially leucine, but not glutamic or aspartic acids.. Functionally, presumably involved in the processing and regular turnover of intracellular proteins. Catalyzes the removal of unsubstituted N-terminal amino acids from various peptides. This Acinetobacter baumannii (strain SDF) protein is Probable cytosol aminopeptidase.